Here is an 815-residue protein sequence, read N- to C-terminus: Sodium/hydrogen exchanger 1 (815 aa).

Residues 1-98 (MVLRSGICGL…FPVLGIDYTH (98 aa)) lie on the Extracellular side of the membrane. Residue T42 is glycosylated (O-linked (GalNAc...) threonine). Residues 42 to 79 (TASTIRSSEPPRERSIGDVTTAPPEVTPESRPVNHSVT) form a disordered region. A glycan (O-linked (GalNAc...) serine) is linked at S56. 3 O-linked (GalNAc...) threonine glycosylation sites follow: T61, T62, and T68. A glycan (N-linked (GlcNAc...) asparagine) is linked at N75. Residues 99–121 (VRTPFEISLWILLACLMKIGFHV) form a helical membrane-spanning segment. The Cytoplasmic portion of the chain corresponds to 122–130 (IPTISSIVP). A helical transmembrane segment spans residues 131-148 (ESCLLIVVGLLVGGLIKG). Residues 149-158 (VGETPPFLQS) are Extracellular-facing. Residues 159 to 176 (DVFFLFLLPPIILDAGYF) traverse the membrane as a helical segment. At 177–186 (LPLRQFTENL) the chain is on the cytoplasmic side. The chain crosses the membrane as a helical span at residues 187–215 (GTILIFAVVGTLWNAFFLGGLMYAVCLVG). The Extracellular portion of the chain corresponds to 216–222 (GEQINNI). The helical transmembrane segment at 223–249 (GLLDNLLFGSIISAVDPVAVLAVFEEI) threads the bilayer. Over 250–252 (HIN) the chain is Cytoplasmic. A helical membrane pass occupies residues 253-283 (ELLHILVFGESLLNDAVTVVLYHLFEEFANY). Over 284 to 287 (EHVG) the chain is Extracellular. Residues 288-322 (IVDIFLGFLSFFVVALGGVLVGVVYGVIAAFTSRF) form a helical membrane-spanning segment. Over 323 to 328 (TSHIRV) the chain is Cytoplasmic. Residues 329-341 (IEPLFVFLYSYMA) traverse the membrane as a helical segment. The Extracellular segment spans residues 342-350 (YLSAELFHL). A helical transmembrane segment spans residues 351 to 371 (SGIMALIASGVVMRPYVEANI). Topologically, residues 372–373 (SH) are cytoplasmic. Residues 374–404 (KSHTTIKYFLKMWSSVSETLIFIFLGVSTVA) traverse the membrane as a helical segment. Residues 405 to 410 (GSHHWN) lie on the Extracellular side of the membrane. A helical transmembrane segment spans residues 411-438 (WTFVISTLLFCLIARVLGVLGLTWFINK). The Cytoplasmic segment spans residues 439-444 (FRIVKL). Residues 445–469 (TPKDQFIIAYGGLRGAIAFSLGYLL) form a helical membrane-spanning segment. Topologically, residues 470-475 (DKKHFP) are extracellular. The helical transmembrane segment at 476-505 (MCDLFLTAIITVIFFTVFVQGMTIRPLVDL) threads the bilayer. The segment at 503–545 (VDLLAVKKKQETKRSINEEIHTQFLDHLLTGIEDICGHYGHHH) is interaction with TESC. Residues 506–815 (LAVKKKQETK…EGEPFFPKGQ (310 aa)) are Cytoplasmic-facing. The tract at residues 509–516 (KKKQETKR) is PI(4,5)P2-binding region. The segment at 515-545 (KRSINEEIHTQFLDHLLTGIEDICGHYGHHH) is interaction with CHP2. A confers pH-dependent PI(4,5)P2 binding region spans residues 540–545 (HYGHHH). The interval 552–560 (RFNKKYVKK) is PI(4,5)P2-binding region. Phosphoserine occurs at positions 599 and 602. At T603 the chain carries Phosphothreonine. S605 and S648 each carry phosphoserine. Positions 633-815 (KILRNNLQKT…EGEPFFPKGQ (183 aa)) are interaction with TESC. The interval 633 to 815 (KILRNNLQKT…EGEPFFPKGQ (183 aa)) is interaction with CALM1. An interaction with PPP3CA region spans residues 684-687 (LTVP). Phosphoserine occurs at positions 693, 697, and 703. An interaction with PPP3CA region spans residues 715 to 720 (PVITID). Phosphoserine is present on residues S723, S726, and S729. Positions 744–815 (LSRDPAKVAE…EGEPFFPKGQ (72 aa)) are disordered. T779 is modified (phosphothreonine). Residues 782–791 (PSDSPSSQRI) show a composition bias toward polar residues. A phosphoserine mark is found at S785, S787, and S796.

This sequence belongs to the monovalent cation:proton antiporter 1 (CPA1) transporter (TC 2.A.36) family. As to quaternary structure, homodimer; dimerization is crucial for its function. Oligomer. Interacts with CALM1 in a calcium-dependent manner. Interacts with TESC. Interacts (via the C-terminal domain) with CHP1; the interaction occurs at the plasma membrane in a calcium-dependent manner and facilitates the maturation, cell surface expression, and function of SLC9A3. Interacts with CHP2; the interaction occurs in a calcium-dependent manner. Interacts with EZR; regulates the cytoskeletal interactions of SLC9A1 and promotes stress fiber formation. Post-translationally, O-glycosylated. Ubiquitinated, leading to its degradation by the proteasome. Ubiquitination is reduced by CHP1. In terms of processing, phosphorylation at Thr-779 increases SLC9A1 activity. Specifically dephosphorylated at Thr-779 by PPP3CA that negatively regulates SLC9A1 activity. Phosphorylation at Ser-648 by AKT1 reduces SLC9A1 binding to CALM1. Post-translationally, palmitoylated; may play a major role in SLC9A1 regulation. Kidney and intestine.

It localises to the cell membrane. It is found in the basolateral cell membrane. The enzyme catalyses Na(+)(in) + H(+)(out) = Na(+)(out) + H(+)(in). The catalysed reaction is Li(+)(out) + H(+)(in) = Li(+)(in) + H(+)(out). It carries out the reaction Li(+)(in) + Na(+)(out) = Li(+)(out) + Na(+)(in). With respect to regulation, activated at acidic pHs. Inhibited by amiloride and 5-amino-substituted derivatives. Inhibited by cariporide and eniporide. Phosphatidylinositol 4,5-bisphosphate (PI(4,5)P2) and phosphatidylinositol 3,4,5-trisphosphate (PI(3,4,5)P3) bind and differentially regulate SLC9A1 activity. Electroneutral Na(+) /H(+) antiporter that extrudes Na(+) in exchange for external protons driven by the inward sodium ion chemical gradient, protecting cells from acidification that occurs from metabolism. Exchanges intracellular H(+) ions for extracellular Na(+) in 1:1 stoichiometry. Plays a key role in maintening intracellular pH neutral and cell volume, and thus is important for cell growth, proliferation, migration and survival. In addition, can transport lithium Li(+) and also functions as a Na(+)/Li(+) antiporter. SLC9A1 also functions in membrane anchoring and organization of scaffolding complexes that coordinate signaling inputs. This is Sodium/hydrogen exchanger 1 from Homo sapiens (Human).